A 299-amino-acid polypeptide reads, in one-letter code: Putative arsenical pump-driving ATPase 2 (299 aa).

Position 8 to 15 (8 to 15 (GKGGVGKT)) interacts with ATP.

Belongs to the arsA ATPase family.

It catalyses the reaction arsenite(in) + ATP + H2O = arsenite(out) + ADP + phosphate + H(+). In terms of biological role, anion-transporting ATPase. Catalyzes the extrusion of arsenite. The sequence is that of Putative arsenical pump-driving ATPase 2 (arsA2) from Aquifex aeolicus (strain VF5).